The primary structure comprises 854 residues: Aryl hydrocarbon receptor (854 aa).

The propeptide occupies 1–9 (MSSGANITY). The tract at residues 1 to 38 (MSSGANITYASRKRRKPVQKTVKPIPAEGIKSNPSKRH) is disordered. 2 short sequence motifs (nuclear localization signal) span residues 12-15 (RKRR) and 36-41 (KRHRDR). One can recognise a bHLH domain in the interval 26–79 (PAEGIKSNPSKRHRDRLNTELDRLASLLPFPQDVINKLDKLSVLRLSVSYLRAK). The tract at residues 37-65 (RHRDRLNTELDRLASLLPFPQDVINKLDK) is DNA-binding. Required for maintaining the overall integrity of the AHR:ARNT heterodimer and its transcriptional activity stretches follow at residues 49–81 (LASLLPFPQDVINKLDKLSVLRLSVSYLRAKSF), 116–124 (LLQALNGFV), and 264–266 (FAI). The Nuclear export signal motif lies at 63 to 71 (LDKLSVLRL). A PAS 1 domain is found at 111–175 (QEGEFLLQAL…AEFQRQLHWA (65 aa)). The region spanning 270–340 (LQPPSILEIR…CAESHIRMIK (71 aa)) is the PAS 2 domain. Positions 346–387 (MTVFRLLAKHSRWRWVQSNARLIYRNGRPDYIIATQRPLTDE) constitute a PAC domain. Residues 425 to 451 (LPIRTKSNTSRKDWAPQSTPSKDSFHP) are disordered. Over residues 440–451 (PQSTPSKDSFHP) the composition is skewed to polar residues.

As to quaternary structure, homodimer. Heterodimer; efficient DNA binding requires dimerization with another bHLH protein. Interacts with ARNT; the heterodimer ARNT:AHR binds to core DNA sequence 5'-TGCGTG-3' within the dioxin response element (DRE) of target gene promoters and activates their transcription. Binds MYBBP1A. Interacts with coactivators including SRC-1, RIP140 and NOCA7, and with the corepressor SMRT. Interacts with NEDD8 and IVNS1ABP. Interacts with BMAL1. Interacts with HSP90AB1. Interacts with TIPARP; leading to mono-ADP-ribosylation of AHR and subsequent inhibition of AHR. Post-translationally, mono-ADP-ribosylated, leading to inhibit transcription activator activity of AHR.

Its subcellular location is the cytoplasm. The protein resides in the nucleus. Functionally, ligand-activated transcription factor that enables cells to adapt to changing conditions by sensing compounds from the environment, diet, microbiome and cellular metabolism, and which plays important roles in development, immunity and cancer. Upon ligand binding, translocates into the nucleus, where it heterodimerizes with ARNT and induces transcription by binding to xenobiotic response elements (XRE). Regulates a variety of biological processes, including angiogenesis, hematopoiesis, drug and lipid metabolism, cell motility and immune modulation. Xenobiotics can act as ligands: upon xenobiotic-binding, activates the expression of multiple phase I and II xenobiotic chemical metabolizing enzyme genes (such as the CYP1A1 gene). Mediates biochemical and toxic effects of halogenated aromatic hydrocarbons. Next to xenobiotics, natural ligands derived from plants, microbiota, and endogenous metabolism are potent AHR agonists. Tryptophan (Trp) derivatives constitute an important class of endogenous AHR ligands. Acts as a negative regulator of anti-tumor immunity: indoles and kynurenic acid generated by Trp catabolism act as ligand and activate AHR, thereby promoting AHR-driven cancer cell motility and suppressing adaptive immunity. Regulates the circadian clock by inhibiting the basal and circadian expression of the core circadian component PER1. Inhibits PER1 by repressing the CLOCK-BMAL1 heterodimer mediated transcriptional activation of PER1. The heterodimer ARNT:AHR binds to core DNA sequence 5'-TGCGTG-3' within the dioxin response element (DRE) of target gene promoters and activates their transcription. The protein is Aryl hydrocarbon receptor (Ahr) of Mus spicilegus (Steppe mouse).